A 185-amino-acid chain; its full sequence is Ribosome-recycling factor (185 aa).

It belongs to the RRF family.

It is found in the cytoplasm. In terms of biological role, responsible for the release of ribosomes from messenger RNA at the termination of protein biosynthesis. May increase the efficiency of translation by recycling ribosomes from one round of translation to another. This chain is Ribosome-recycling factor, found in Campylobacter hominis (strain ATCC BAA-381 / DSM 21671 / CCUG 45161 / LMG 19568 / NCTC 13146 / CH001A).